The following is a 55-amino-acid chain: MAKKNREKIKMISSAGTGHYYTTTKNKRNTPDKLKLKKYDPIIRKHILYNEGKIK.

This sequence belongs to the bacterial ribosomal protein bL33 family.

This Buchnera aphidicola subsp. Schizaphis graminum (strain Sg) protein is Large ribosomal subunit protein bL33.